The sequence spans 109 residues: Putative double-stranded DNA mimic protein CKO_01325 (109 aa).

This sequence belongs to the putative dsDNA mimic protein family.

May act as a double-stranded DNA (dsDNA) mimic. Probably regulates the activity of a dsDNA-binding protein. This is Putative double-stranded DNA mimic protein CKO_01325 from Citrobacter koseri (strain ATCC BAA-895 / CDC 4225-83 / SGSC4696).